Consider the following 173-residue polypeptide: Regulatory protein RecX (173 aa).

It belongs to the RecX family.

The protein localises to the cytoplasm. In terms of biological role, modulates RecA activity. In Mycobacterium avium (strain 104), this protein is Regulatory protein RecX.